The following is a 435-amino-acid chain: Cell adhesion molecule 2 (435 aa).

The N-terminal stretch at 1–24 (MIWKRSAVLRFYSVCGLLLQGSQG) is a signal peptide. The Extracellular segment spans residues 25–367 (QFPLTQNVTV…ALAGQNGPDH (343 aa)). The region spanning 27 to 119 (PLTQNVTVVE…PVKTSKAYLT (93 aa)) is the Ig-like V-type domain. N-linked (GlcNAc...) asparagine glycans are attached at residues Asn-31 and Asn-51. Disulfide bonds link Cys-44/Cys-104, Cys-146/Cys-203, and Cys-248/Cys-296. Ig-like C2-type domains lie at 127–219 (PQIS…VAMQ) and 227–312 (PSVK…YVLI). Asn-291 is a glycosylation site (N-linked (GlcNAc...) asparagine). The chain crosses the membrane as a helical span at residues 368–388 (ALIGGIVAVVVFVTLCSIFLL). Topologically, residues 389–435 (GRYLARHKGTYLTNEAKGAEDAPDADTAIINAEGSQVNAEEKKEYFI) are cytoplasmic. Phosphoserine is present on Ser-423.

The protein belongs to the nectin family.

It localises to the cell membrane. The protein resides in the synapse. The protein localises to the cell projection. It is found in the axon. Its function is as follows. Adhesion molecule that engages in homo- and heterophilic interactions with the other nectin-like family members, leading to cell aggregation. Important for synapse organization, providing regulated trans-synaptic adhesion. Preferentially binds to oligodendrocytes. (Microbial infection) Induces cell fusion in neuron infected by a neuropathogenic strain of measles. Interacts with measles hemagglutinin to trigger hyperfusogenic F-mediated membrane fusion and presumably transsynaptic cell-to-cell transmission of the virus. This is Cell adhesion molecule 2 (CADM2) from Homo sapiens (Human).